The following is a 312-amino-acid chain: Ribose-phosphate pyrophosphokinase (312 aa).

Residues 34 to 36 (DLE) and 93 to 94 (RQ) contribute to the ATP site. Mg(2+)-binding residues include histidine 127 and aspartate 168. The active site involves lysine 192. D-ribose 5-phosphate is bound by residues arginine 194, aspartate 218, and 222–226 (DSAGT).

It belongs to the ribose-phosphate pyrophosphokinase family. Class I subfamily. As to quaternary structure, homohexamer. Mg(2+) serves as cofactor.

It is found in the cytoplasm. It carries out the reaction D-ribose 5-phosphate + ATP = 5-phospho-alpha-D-ribose 1-diphosphate + AMP + H(+). The protein operates within metabolic intermediate biosynthesis; 5-phospho-alpha-D-ribose 1-diphosphate biosynthesis; 5-phospho-alpha-D-ribose 1-diphosphate from D-ribose 5-phosphate (route I): step 1/1. Functionally, involved in the biosynthesis of the central metabolite phospho-alpha-D-ribosyl-1-pyrophosphate (PRPP) via the transfer of pyrophosphoryl group from ATP to 1-hydroxyl of ribose-5-phosphate (Rib-5-P). This chain is Ribose-phosphate pyrophosphokinase, found in Caulobacter vibrioides (strain ATCC 19089 / CIP 103742 / CB 15) (Caulobacter crescentus).